A 233-amino-acid polypeptide reads, in one-letter code: Demethylmenaquinone methyltransferase (233 aa).

S-adenosyl-L-methionine is bound by residues Thr58, Asp79, and 106–107 (NA).

It belongs to the class I-like SAM-binding methyltransferase superfamily. MenG/UbiE family.

The catalysed reaction is a 2-demethylmenaquinol + S-adenosyl-L-methionine = a menaquinol + S-adenosyl-L-homocysteine + H(+). It participates in quinol/quinone metabolism; menaquinone biosynthesis; menaquinol from 1,4-dihydroxy-2-naphthoate: step 2/2. Methyltransferase required for the conversion of demethylmenaquinol (DMKH2) to menaquinol (MKH2). The sequence is that of Demethylmenaquinone methyltransferase from Bacillus velezensis (strain DSM 23117 / BGSC 10A6 / LMG 26770 / FZB42) (Bacillus amyloliquefaciens subsp. plantarum).